Reading from the N-terminus, the 513-residue chain is Maturase K (513 aa).

The protein belongs to the intron maturase 2 family. MatK subfamily.

It localises to the plastid. The protein localises to the chloroplast. Functionally, usually encoded in the trnK tRNA gene intron. Probably assists in splicing its own and other chloroplast group II introns. This is Maturase K from Byblis liniflora (Carnivorous plant).